The sequence spans 194 residues: Orotate phosphoribosyltransferase (194 aa).

116-124 is a 5-phospho-alpha-D-ribose 1-diphosphate binding site; it reads EDIVTTGLS. Orotate-binding residues include Thr-120 and Arg-148.

This sequence belongs to the purine/pyrimidine phosphoribosyltransferase family. PyrE subfamily. As to quaternary structure, homodimer. It depends on Mg(2+) as a cofactor.

The catalysed reaction is orotidine 5'-phosphate + diphosphate = orotate + 5-phospho-alpha-D-ribose 1-diphosphate. It functions in the pathway pyrimidine metabolism; UMP biosynthesis via de novo pathway; UMP from orotate: step 1/2. Catalyzes the transfer of a ribosyl phosphate group from 5-phosphoribose 1-diphosphate to orotate, leading to the formation of orotidine monophosphate (OMP). This chain is Orotate phosphoribosyltransferase, found in Caulobacter vibrioides (strain ATCC 19089 / CIP 103742 / CB 15) (Caulobacter crescentus).